We begin with the raw amino-acid sequence, 589 residues long: Probable galacturonosyltransferase 6 (589 aa).

Residues 1–6 (MKQIRR) lie on the Cytoplasmic side of the membrane. A helical; Signal-anchor for type II membrane protein transmembrane segment spans residues 7–27 (WQRILILALLSISVFAPLIFV). At 28 to 589 (SNRLKSITPV…TYLQQCNLQA (562 aa)) the chain is on the lumenal side. Asparagine 83 and asparagine 126 each carry an N-linked (GlcNAc...) asparagine glycan. Residues 127 to 151 (KTDFKPPLSKGEKNTRVQPDRATDV) form a disordered region. Basic and acidic residues predominate over residues 136-151 (KGEKNTRVQPDRATDV). N-linked (GlcNAc...) asparagine glycans are attached at residues asparagine 317 and asparagine 454.

The protein belongs to the glycosyltransferase 8 family. Expressed in roots, inflorescences, siliques, leaves and stems.

It is found in the golgi apparatus membrane. It functions in the pathway glycan metabolism; pectin biosynthesis. Its function is as follows. Probably involved in pectin biosynthesis in cell walls. The sequence is that of Probable galacturonosyltransferase 6 (GAUT6) from Arabidopsis thaliana (Mouse-ear cress).